A 472-amino-acid chain; its full sequence is Adenosylhomocysteinase (472 aa).

3 residues coordinate substrate: T61, D136, and E196. NAD(+) is bound at residue 197–199; the sequence is TTT. Positions 226 and 230 each coordinate substrate. NAD(+) is bound by residues N231, 260–265, E283, N318, 339–341, and N384; these read GYGDVG and IGH.

This sequence belongs to the adenosylhomocysteinase family. NAD(+) serves as cofactor.

The protein resides in the cytoplasm. The enzyme catalyses S-adenosyl-L-homocysteine + H2O = L-homocysteine + adenosine. Its pathway is amino-acid biosynthesis; L-homocysteine biosynthesis; L-homocysteine from S-adenosyl-L-homocysteine: step 1/1. May play a key role in the regulation of the intracellular concentration of adenosylhomocysteine. The sequence is that of Adenosylhomocysteinase from Cupriavidus necator (strain ATCC 17699 / DSM 428 / KCTC 22496 / NCIMB 10442 / H16 / Stanier 337) (Ralstonia eutropha).